The chain runs to 226 residues: Gap junction beta-2 protein (226 aa).

Residues 2-13 (DWSALQTILGGV) lie within the membrane without spanning it. The Cytoplasmic portion of the chain corresponds to 14 to 20 (NKHSTSI). A helical transmembrane segment spans residues 21-40 (GKIWLTVLFIFRIMILVVAA). The Extracellular segment spans residues 41–73 (KEVWGDEQADFVCNTLQPGCKNVCYDHYFPISH). Ca(2+)-binding residues include E42, G45, and E47. 3 disulfide bridges follow: C53–C180, C60–C174, and C64–C169. Residues 74 to 94 (IRLWALQLIFVSTPALLVAMH) form a helical membrane-spanning segment. The Cytoplasmic portion of the chain corresponds to 95 to 135 (VAYYRHEKKRKFIRGEIKTEFKDIEEIKNQKVRIEGSLWWT). A helical membrane pass occupies residues 136–156 (YTGSIFFRVIFEAAFMYVFYV). Over 157-189 (MYDGFAMQRLVKCNAWPCPNTVDCFVSRPTEKT) the chain is Extracellular. The helical transmembrane segment at 190-210 (VFTVFMIAVSGICILLNVTEL) threads the bilayer. The Cytoplasmic portion of the chain corresponds to 211-226 (CYLLIRFCSGKSKKPV).

The protein belongs to the connexin family. Beta-type (group I) subfamily. As to quaternary structure, a hemichannel or connexon is composed of a hexamer of connexins. A functional gap junction is formed by the apposition of two hemichannels. Forms heteromeric channels with GJB4. Interacts with CNST.

The protein resides in the cell membrane. It localises to the cell junction. Its subcellular location is the gap junction. Structural component of gap junctions. Gap junctions are dodecameric channels that connect the cytoplasm of adjoining cells. They are formed by the docking of two hexameric hemichannels, one from each cell membrane. Small molecules and ions diffuse from one cell to a neighboring cell via the central pore. The sequence is that of Gap junction beta-2 protein (GJB2) from Ovis aries (Sheep).